The primary structure comprises 1211 residues: Endoplasmic reticulum transmembrane helix translocase (1211 aa).

Topologically, residues 1-23 (MGSKALITSPDISSGQLYIKLPT) are cytoplasmic. The chain crosses the membrane as a helical span at residues 24 to 44 (FFHLYVWPFALFVYPYIGYVY). Over 45-54 (QNKLYSEEVR) the chain is Lumenal. The helical transmembrane segment at 55-75 (YLTYIAVGTIHALFWLAGEWN) threads the bilayer. Topologically, residues 76–191 (TKVYCLMTCR…FDIPIPTFGT (116 aa)) are cytoplasmic. The segment at 155-185 (TIGTLKKSTGLTNIQSEIFLYRYGKNCFDIP) is A-domain; part 1. A helical transmembrane segment spans residues 192 to 212 (LFKEHAVAPFFVFQIFCCVLW). Over 213–216 (CLDD) the chain is Lumenal. The chain crosses the membrane as a helical span at residues 217-237 (YWYFSLFSMFMIIALECSVVW). Topologically, residues 238–397 (QRQRTLTEFR…EKVTANNRES (160 aa)) are cytoplasmic. Positions 250-388 (SIKPYEIQVY…LVRTMVFSSE (139 aa)) are A-domain; part 2. A helical membrane pass occupies residues 398–418 (LYFILFLLVFAIAASGYVWHV). The Lumenal portion of the chain corresponds to 419–1057 (GSKTERSRYK…KERPQAGIFN (639 aa)). A P-domain; part 1 region spans residues 464 to 493 (YIYCTEPFRIPLSGHLDICCFDKTGTLTEE). D485 acts as the 4-aspartylphosphate intermediate in catalysis. Mg(2+)-binding residues include D485 and T487. ATP is bound by residues 485–487 (DKT), F587, R644, D710, and 824–828 (DGTND). The segment at 495 to 685 (MVVQGIAGVN…FAGFLIFTSP (191 aa)) is N-domain. Residues 688–845 (EDARQTVQML…HVGVALLNAS (158 aa)) form a P-domain; part 2 region. D824 is a binding site for Mg(2+). Residues 846-955 (EEDMLEMQER…NASDDEAPKL (110 aa)) form an arm-like region. A P-domain; part 3 region spans residues 956–971 (KLGDASVAAPFTSKLA). The chain crosses the membrane as a helical span at residues 1058–1078 (TYIIGSVLGQFAIHIVTLIYI). Residues 1079 to 1100 (TRVVYLYEDPLEKVDLEETFKP) lie on the Cytoplasmic side of the membrane. The helical transmembrane segment at 1101–1121 (SLLNTAIYLLQLIQQVSTFAI) threads the bilayer. Residues 1122–1136 (NYQGRPFREALSENK) are Lumenal-facing. A helical transmembrane segment spans residues 1137-1157 (GMYYGLLGIAFVAIAGVTEFS). The Cytoplasmic portion of the chain corresponds to 1158–1174 (PELNAKLQLVKMAYNFQ). A helical membrane pass occupies residues 1175–1195 (IQLLATMVVDYAACWIIEELM). Residues 1196-1211 (KKYFRDNKPKEIVLRN) lie on the Lumenal side of the membrane.

Belongs to the cation transport ATPase (P-type) (TC 3.A.3) family. Type V subfamily. Requires Mg(2+) as cofactor.

The protein resides in the endoplasmic reticulum membrane. The catalysed reaction is [protein]-with a C-terminal TM segment(out) + ATP + H2O = [protein]-with a C-terminal TM segment(in) + ADP + phosphate + H(+). Functionally, endoplasmic reticulum translocase required to remove mitochondrial transmembrane proteins mistargeted to the endoplasmic reticulum. Acts as a dislocase that mediates the ATP-dependent extraction of mislocalized mitochondrial transmembrane proteins from the endoplasmic reticulum membrane. Specifically binds mitochondrial tail-anchored transmembrane proteins: has an atypically large substrate-binding pocket that recognizes and binds moderately hydrophobic transmembranes with short hydrophilic lumenal domains. Involved in controlling nuclear calcium ion levels. Required for cytokinesis and stabilizing microtubules. Required for assembly of the forespore membrane. Involved in calcium transport to the endoplasmic reticulum. This Schizosaccharomyces pombe (strain 972 / ATCC 24843) (Fission yeast) protein is Endoplasmic reticulum transmembrane helix translocase.